A 468-amino-acid polypeptide reads, in one-letter code: Ribulose bisphosphate carboxylase large chain (468 aa).

K5 carries the post-translational modification N6,N6,N6-trimethyllysine. Residues N114 and T164 each contribute to the substrate site. Catalysis depends on K166, which acts as the Proton acceptor. K168 contacts substrate. Positions 192, 194, and 195 each coordinate Mg(2+). K192 bears the N6-carboxylysine mark. The active-site Proton acceptor is the H285. Substrate-binding residues include R286, H318, and S370.

Belongs to the RuBisCO large chain family. Type I subfamily. As to quaternary structure, heterohexadecamer of 8 large chains and 8 small chains; disulfide-linked. The disulfide link is formed within the large subunit homodimers. Requires Mg(2+) as cofactor. Post-translationally, the disulfide bond which can form in the large chain dimeric partners within the hexadecamer appears to be associated with oxidative stress and protein turnover.

It localises to the plastid. The protein resides in the chloroplast. The enzyme catalyses 2 (2R)-3-phosphoglycerate + 2 H(+) = D-ribulose 1,5-bisphosphate + CO2 + H2O. It catalyses the reaction D-ribulose 1,5-bisphosphate + O2 = 2-phosphoglycolate + (2R)-3-phosphoglycerate + 2 H(+). Functionally, ruBisCO catalyzes two reactions: the carboxylation of D-ribulose 1,5-bisphosphate, the primary event in carbon dioxide fixation, as well as the oxidative fragmentation of the pentose substrate in the photorespiration process. Both reactions occur simultaneously and in competition at the same active site. In Anthospermum herbaceum, this protein is Ribulose bisphosphate carboxylase large chain.